We begin with the raw amino-acid sequence, 105 residues long: Small ribosomal subunit protein uS10 (105 aa).

It belongs to the universal ribosomal protein uS10 family. As to quaternary structure, part of the 30S ribosomal subunit.

Functionally, involved in the binding of tRNA to the ribosomes. This chain is Small ribosomal subunit protein uS10, found in Francisella philomiragia subsp. philomiragia (strain ATCC 25017 / CCUG 19701 / FSC 153 / O#319-036).